Here is a 28-residue protein sequence, read N- to C-terminus: Metallothionein-like protein type 2 LSC210 (28 aa).

This sequence belongs to the metallothionein superfamily. Type 15 family.

In terms of biological role, metallothioneins have a high content of cysteine residues that bind various heavy metals. This chain is Metallothionein-like protein type 2 LSC210 (LSC210), found in Brassica napus (Rape).